The primary structure comprises 395 residues: Protein maternal effect lethal 26 (395 aa).

The 122-residue stretch at 41 to 162 folds into the MATH domain; sequence KVQHTWTVKN…RDMIIVNVEI (122 aa). Residues 201 to 269 enclose the BTB domain; that stretch reads CDFAINVNGK…IYCGRCNKDI (69 aa).

Interacts (via BTB domain) with cul-3. Seems to be a component of a E3 ubiquitin-protein ligase complex containing cul-3. Interacts (probably via MATH domain) with mei-1, which targets mei-1 for ubiquitin-mediated proteolysis. Interacts (probably via MATH domain) with ppfr-1, the regulatory subunit of the PP4 complex; targets ppfr-1 for ubiquitin-mediated proteolysis. May interact (via MATH domain) with unc-89 (via Ig-like C2-type domain 2/3 and, Ig-like C2-type domain 50 and fibronectin type-III domain 2). In terms of tissue distribution, expressed in body wall muscles.

It localises to the cytoplasm. The protein localises to the myofibril. It is found in the sarcomere. Its subcellular location is the m line. The protein resides in the i band. It functions in the pathway protein modification; protein ubiquitination. Probable substrate-specific adapter of an E3 ubiquitin-protein ligase complex which mediates the ubiquitination and subsequent proteasomal degradation of target proteins. Controls degradation of microtubule severing protein mei-1 after meiosis. Controls degradation of ppfr-1, the regulatory subunit of PP4 complex, after meiosis. In body wall muscles, involved in the organization of myosin thick filaments, likely by regulating the degradation of mei-1 downstream of unc-89. May also activate the TORC1 pathway. This is Protein maternal effect lethal 26 (mel-26) from Caenorhabditis elegans.